The sequence spans 547 residues: Chaperonin GroEL (547 aa).

ATP-binding positions include 30–33 (TLGP), Lys-51, 87–91 (DGTTT), Gly-415, and Asp-496.

It belongs to the chaperonin (HSP60) family. As to quaternary structure, forms a cylinder of 14 subunits composed of two heptameric rings stacked back-to-back. Interacts with the co-chaperonin GroES.

It localises to the cytoplasm. It carries out the reaction ATP + H2O + a folded polypeptide = ADP + phosphate + an unfolded polypeptide.. In terms of biological role, together with its co-chaperonin GroES, plays an essential role in assisting protein folding. The GroEL-GroES system forms a nano-cage that allows encapsulation of the non-native substrate proteins and provides a physical environment optimized to promote and accelerate protein folding. This Chlorobaculum parvum (strain DSM 263 / NCIMB 8327) (Chlorobium vibrioforme subsp. thiosulfatophilum) protein is Chaperonin GroEL.